A 318-amino-acid chain; its full sequence is Thymidylate synthase (318 aa).

Residues R26 and 181–182 (RR) each bind dUMP. Catalysis depends on C201, which acts as the Nucleophile. Residues 221-224 (RSAD), N232, and 262-264 (HIY) contribute to the dUMP site. D224 provides a ligand contact to (6R)-5,10-methylene-5,6,7,8-tetrahydrofolate. A (6R)-5,10-methylene-5,6,7,8-tetrahydrofolate-binding site is contributed by A317.

This sequence belongs to the thymidylate synthase family. Bacterial-type ThyA subfamily. In terms of assembly, homodimer.

The protein resides in the cytoplasm. It carries out the reaction dUMP + (6R)-5,10-methylene-5,6,7,8-tetrahydrofolate = 7,8-dihydrofolate + dTMP. Its pathway is pyrimidine metabolism; dTTP biosynthesis. In terms of biological role, catalyzes the reductive methylation of 2'-deoxyuridine-5'-monophosphate (dUMP) to 2'-deoxythymidine-5'-monophosphate (dTMP) while utilizing 5,10-methylenetetrahydrofolate (mTHF) as the methyl donor and reductant in the reaction, yielding dihydrofolate (DHF) as a by-product. This enzymatic reaction provides an intracellular de novo source of dTMP, an essential precursor for DNA biosynthesis. This Staphylococcus haemolyticus (strain JCSC1435) protein is Thymidylate synthase.